Here is a 348-residue protein sequence, read N- to C-terminus: Gamma-glutamyl hydrolase 1 (348 aa).

An N-terminal signal peptide occupies residues 1 to 23; that stretch reads MIDNNCLYKEELNRNSYSGLAKE. Residues 46–342 enclose the Gamma-glutamyl hydrolase domain; that stretch reads SPDPNLNYRP…RGYDEVYIFT (297 aa). The active-site Nucleophile is the Cys156. Residue His269 is part of the active site.

The protein belongs to the peptidase C26 family. As to expression, highly expressed in roots and at lower levels in leaves, stems and siliques.

It is found in the vacuole. It localises to the secreted. Its subcellular location is the extracellular space. The protein resides in the cell wall. The enzyme catalyses (6S)-5,6,7,8-tetrahydrofolyl-(gamma-L-Glu)(n) + (n-1) H2O = (6S)-5,6,7,8-tetrahydrofolate + (n-1) L-glutamate. Its function is as follows. Cleaves the polyglutamate sidechains of folate polyglutamates in the vacuole. Is important for polyglutamyl tail length determination before vacuolar exit. Plays a role in folate stability and intracellular folate content. The polypeptide is Gamma-glutamyl hydrolase 1 (GGH1) (Arabidopsis thaliana (Mouse-ear cress)).